Consider the following 321-residue polypeptide: Olfactory receptor 56B34 (321 aa).

At 1–36 (MGTALHETNSSEVHVSEFILLGFPGIHEFQIWLSLP) the chain is on the extracellular side. Residues 37 to 57 (MALLYIVALGANLLILITIYL) form a helical membrane-spanning segment. At 58 to 70 (EPTLHQPMYQFLG) the chain is on the cytoplasmic side. The helical transmembrane segment at 71 to 91 (ILAAVDIGLATTSMPKILAIL) threads the bilayer. The Extracellular segment spans residues 92 to 105 (WFDAKTISLPECFA). A disulfide bond links cysteine 103 and cysteine 185. A helical transmembrane segment spans residues 106–126 (QIYAIHTFMCMESGVFLCMAI). Residues 127–128 (DR) lie on the Cytoplasmic side of the membrane. Residues 129-149 (YVAICYPLQYPSIVTEAFVIK) form a helical membrane-spanning segment. Residues 150–207 (ATLSMLLRNGLLTIPVPVLAAQRQYCSRNEIDHCLCSNLGVISLACDDITVNRFYQLA) are Extracellular-facing. A helical membrane pass occupies residues 208-228 (LAWLVVGSDMILVYASYALII). Residues 229 to 250 (RSVLRLNSTEAASKALSTCSSH) are Cytoplasmic-facing. A helical membrane pass occupies residues 251-271 (LILIMFYYTAIVIVSVTHLAG). Over 272 to 275 (RRVP) the chain is Extracellular. Residues 276 to 296 (LIPVLLNVMHIVIPPSLNPVV) traverse the membrane as a helical segment. Topologically, residues 297 to 321 (YALRTQELKVGFRKVFSLSEFVSRK) are cytoplasmic.

This sequence belongs to the G-protein coupled receptor 1 family.

It is found in the cell membrane. Functionally, odorant receptor. The chain is Olfactory receptor 56B34 from Mus musculus (Mouse).